A 209-amino-acid polypeptide reads, in one-letter code: Mitochondrial import inner membrane translocase subunit Tim23 (209 aa).

Helical transmembrane passes span 73-93, 125-145, and 181-197; these read FELAFFTIGGCCMTGAAFGAM, ALWANTLGSLALLYSAFGVII, and GLAGLTLTSLYALYNNW.

This sequence belongs to the Tim17/Tim22/Tim23 family. In terms of assembly, component of the TIM23 complex at least composed of TIMM23, TIMM17 (TIMM17A or TIMM17B) and TIMM50; within this complex, directly interacts with TIMM50. The complex interacts with the TIMM44 component of the PAM complex and with DNAJC15. Upon mitochondrial depolarization, interacts with PINK1; the interaction is required for PINK1 accumulation at the outer mitochondrial membrane, kinase activation by autophosphorylation and PRKN recruitement to mitochondria.

The protein resides in the mitochondrion inner membrane. Essential component of the TIM23 complex, a complex that mediates the translocation of transit peptide-containing proteins across the mitochondrial inner membrane. Has a role in the activation of stress-induced mitophagy by protecting PINK1 from OMA1-mediated degradation and facilitating its accumulation at the outer mitochondrial membrane in response to depolarization. The protein is Mitochondrial import inner membrane translocase subunit Tim23 (Timm23) of Mus musculus (Mouse).